We begin with the raw amino-acid sequence, 312 residues long: R2-like ligand binding oxidase (312 aa).

3 residues coordinate Mn(2+): glutamate 68, glutamate 101, and histidine 104. The segment at residues 71–162 (VTQDIQPFMA…AAQVRASATY (92 aa)) is a cross-link (3-(O4'-tyrosyl)-valine (Val-Tyr)). Glutamate 101 is a Fe cation binding site. Residues glutamate 167, glutamate 202, and histidine 205 each coordinate Fe cation.

This sequence belongs to the ribonucleoside diphosphate reductase small chain family. R2-like ligand binding oxidase subfamily. Homodimer. It depends on Fe cation as a cofactor. Requires Mn(2+) as cofactor.

Its function is as follows. Probable oxidase that might be involved in lipid metabolism. This chain is R2-like ligand binding oxidase, found in Mycobacterium sp. (strain KMS).